Reading from the N-terminus, the 240-residue chain is UDP-2,3-diacylglucosamine hydrolase (240 aa).

Residues D8, H10, D41, N79, and H114 each coordinate Mn(2+). Residue 79 to 80 participates in substrate binding; that stretch reads NR. Substrate is bound by residues D122, S160, N164, K167, and H195. Mn(2+) is bound by residues H195 and H197.

This sequence belongs to the LpxH family. The cofactor is Mn(2+).

The protein resides in the cell inner membrane. It carries out the reaction UDP-2-N,3-O-bis[(3R)-3-hydroxytetradecanoyl]-alpha-D-glucosamine + H2O = 2-N,3-O-bis[(3R)-3-hydroxytetradecanoyl]-alpha-D-glucosaminyl 1-phosphate + UMP + 2 H(+). It functions in the pathway glycolipid biosynthesis; lipid IV(A) biosynthesis; lipid IV(A) from (3R)-3-hydroxytetradecanoyl-[acyl-carrier-protein] and UDP-N-acetyl-alpha-D-glucosamine: step 4/6. Its function is as follows. Hydrolyzes the pyrophosphate bond of UDP-2,3-diacylglucosamine to yield 2,3-diacylglucosamine 1-phosphate (lipid X) and UMP by catalyzing the attack of water at the alpha-P atom. Involved in the biosynthesis of lipid A, a phosphorylated glycolipid that anchors the lipopolysaccharide to the outer membrane of the cell. This is UDP-2,3-diacylglucosamine hydrolase from Serratia proteamaculans (strain 568).